Reading from the N-terminus, the 1185-residue chain is Chromosome partition protein Smc (1185 aa).

Position 34–41 (34–41) interacts with ATP; that stretch reads PNGSGKSN. 2 coiled-coil regions span residues 174–376 and 412–526; these read WRRS…EKDI and ENIV…KLDV. Positions 534–644 constitute an SMC hinge domain; it reads VGEIISLQKK…CENIDNAFEI (111 aa). Residues 679–1039 are a coiled coil; that stretch reads NIIGRKREIE…IDAMTEKMKG (361 aa).

This sequence belongs to the SMC family. Homodimer.

It is found in the cytoplasm. Required for chromosome condensation and partitioning. The chain is Chromosome partition protein Smc from Clostridium kluyveri (strain NBRC 12016).